A 313-amino-acid chain; its full sequence is Biotin synthase (313 aa).

Positions 28 to 258 (NFGNDIELCS…LFPQARLRLS (231 aa)) constitute a Radical SAM core domain. Residues cysteine 46, cysteine 50, and cysteine 53 each coordinate [4Fe-4S] cluster. The [2Fe-2S] cluster site is built by cysteine 90, cysteine 121, cysteine 181, and arginine 256.

It belongs to the radical SAM superfamily. Biotin synthase family. In terms of assembly, homodimer. It depends on [4Fe-4S] cluster as a cofactor. [2Fe-2S] cluster is required as a cofactor.

The enzyme catalyses (4R,5S)-dethiobiotin + (sulfur carrier)-SH + 2 reduced [2Fe-2S]-[ferredoxin] + 2 S-adenosyl-L-methionine = (sulfur carrier)-H + biotin + 2 5'-deoxyadenosine + 2 L-methionine + 2 oxidized [2Fe-2S]-[ferredoxin]. It participates in cofactor biosynthesis; biotin biosynthesis; biotin from 7,8-diaminononanoate: step 2/2. Its function is as follows. Catalyzes the conversion of dethiobiotin (DTB) to biotin by the insertion of a sulfur atom into dethiobiotin via a radical-based mechanism. The chain is Biotin synthase from Francisella tularensis subsp. tularensis (strain WY96-3418).